A 64-amino-acid chain; its full sequence is MDARLLEILVCPICKGPLHYDRAAQELICNADKLAYPIRDGIPVMLVDEARQTVEGTPVDPAGR.

This sequence belongs to the UPF0434 family.

The polypeptide is UPF0434 protein Bcep18194_A5877 (Burkholderia lata (strain ATCC 17760 / DSM 23089 / LMG 22485 / NCIMB 9086 / R18194 / 383)).